Consider the following 273-residue polypeptide: 2,3,4,5-tetrahydropyridine-2,6-dicarboxylate N-succinyltransferase (273 aa).

The substrate site is built by Arg105 and Asp142.

This sequence belongs to the transferase hexapeptide repeat family. As to quaternary structure, homotrimer.

It is found in the cytoplasm. The catalysed reaction is (S)-2,3,4,5-tetrahydrodipicolinate + succinyl-CoA + H2O = (S)-2-succinylamino-6-oxoheptanedioate + CoA. It functions in the pathway amino-acid biosynthesis; L-lysine biosynthesis via DAP pathway; LL-2,6-diaminopimelate from (S)-tetrahydrodipicolinate (succinylase route): step 1/3. The chain is 2,3,4,5-tetrahydropyridine-2,6-dicarboxylate N-succinyltransferase from Bordetella parapertussis (strain 12822 / ATCC BAA-587 / NCTC 13253).